We begin with the raw amino-acid sequence, 87 residues long: Small ribosomal subunit protein bS20 (87 aa).

Positions 1 to 26 are disordered; that stretch reads MANIKSAKKRAVQSEKARKHNASRRS.

The protein belongs to the bacterial ribosomal protein bS20 family.

Its function is as follows. Binds directly to 16S ribosomal RNA. This Salmonella gallinarum (strain 287/91 / NCTC 13346) protein is Small ribosomal subunit protein bS20.